The sequence spans 482 residues: NAD(+) hydrolase ThsA (482 aa).

Positions 3 to 281 (EHEQKIMIDR…EEITKRFRCK (279 aa)) constitute a Deacetylase sirtuin-type domain. Positions 112 and 150 each coordinate NAD(+). Residue His150 is the Proton acceptor of the active site. Residues 282–482 (NVFLSGSAHE…SKIHDVIKLI (201 aa)) are SLOG (STALD) domain. 3'cADPR-binding residues include Gly287, Ser288, Leu324, Phe355, Arg373, Lys390, Gly407, and Glu411.

The protein belongs to the soluble Thoeris ThsA family. Homotetramer in solution.

It catalyses the reaction NAD(+) + H2O = ADP-D-ribose + nicotinamide + H(+). In vivo probably activated by a cyclic ADP-D-ribose generated by ThsB (might be 3'cADPR). Functionally, NAD(+) hydrolyzing component (NADase) of the Thoeris antiviral defense system, composed of ThsA and ThsB (maybe J591_1492). As purified, has NADase activity that is not activated by any tested cADPR isomers; binds 3'cADPR better than 2'cADPR. It was suggested the purified protein is already in a fully active state. Upon activation binds and hydrolyzes NAD(+), leading to cell death and inhibition of phage replication. In Acinetobacter baumannii (strain 532279), this protein is NAD(+) hydrolase ThsA.